The sequence spans 114 residues: FK506-binding protein 1 (114 aa).

A PPIase FKBP-type domain is found at 26-114 (GDLVTIHYTG…IFDVELLKVN (89 aa)).

The protein belongs to the FKBP-type PPIase family. FKBP1 subfamily.

The protein localises to the cytoplasm. The catalysed reaction is [protein]-peptidylproline (omega=180) = [protein]-peptidylproline (omega=0). Inhibited by both FK506 and rapamycin. Functionally, PPIases accelerate the folding of proteins. It catalyzes the cis-trans isomerization of proline imidic peptide bonds in oligopeptides. The chain is FK506-binding protein 1 (FPR1) from Candida glabrata (strain ATCC 2001 / BCRC 20586 / JCM 3761 / NBRC 0622 / NRRL Y-65 / CBS 138) (Yeast).